The chain runs to 213 residues: Isomeliandiol synthase MOI2 (213 aa).

Helical transmembrane passes span 18–38 (AALH…SWFI), 52–72 (VLCW…YYVF), 109–129 (IESM…YALA), 137–157 (ILQF…FLSA), and 171–191 (YWAY…LIAI). The EXPERA domain maps to 48 to 190 (MDRVVLCWWA…IWVIVPALIA (143 aa)).

Belongs to the EBP family. Mainly expressed in petioles.

The protein resides in the membrane. The catalysed reaction is 7,8-epoxymelianol = isomeliandiol. The protein operates within secondary metabolite biosynthesis; terpenoid biosynthesis. Isomerase involved in the biosynthesis of limonoids triterpene natural products such as azadirachtin, an antifeedant widely used as bioinsecticide, and possessing many medicinal applications including anti-tumoral, anti-malarial, anti-rheumatic, antibacterial, anti-inflammatory, anti-pyretic and diuretic effects. Catalyzes the conversion of 7,8-epoxymelianol to isomeliandiol via skeletal rearrangements. The protein is Isomeliandiol synthase MOI2 of Melia azedarach (Chinaberry tree).